The primary structure comprises 151 residues: uncharacterized protein (151 aa).

This is an uncharacterized protein from Archaeoglobus fulgidus (strain ATCC 49558 / DSM 4304 / JCM 9628 / NBRC 100126 / VC-16).